We begin with the raw amino-acid sequence, 584 residues long: Cationic amino acid transporter 7, chloroplastic (584 aa).

A chloroplast-targeting transit peptide spans 1–49 (MEAQYRNHDGDTSFSSLRVYLNSLSDTPSRFSRRAVSVSTSYDEMSRVR). The next 14 helical transmembrane spans lie at 62–82 (WYDL…FVTT), 90–110 (AGPS…LSAF), 131–151 (ITFG…DYVL), 185–205 (GFNE…FVIC), 214–234 (VNMV…VMGF), 254–274 (FFPF…LSYI), 293–313 (IPMG…LMAI), 346–366 (VVGI…MLGQ), 396–416 (ASAF…LNVL), 417–437 (LNLV…AVIF), 449–469 (WPTL…TLVW), 480–500 (FILG…HCVV), 508–528 (FWGV…NIFL), and 540–560 (FGFF…HASY).

It belongs to the amino acid-polyamine-organocation (APC) superfamily. Cationic amino acid transporter (CAT) (TC 2.A.3.3) family.

The protein resides in the plastid. Its subcellular location is the chloroplast membrane. Its function is as follows. Permease involved in the transport of the cationic amino acids. The chain is Cationic amino acid transporter 7, chloroplastic (CAT7) from Arabidopsis thaliana (Mouse-ear cress).